Reading from the N-terminus, the 427-residue chain is Synaptotagmin-A (427 aa).

The Vesicular segment spans residues 1–57; sequence MKLTEAYHDALAALPATPPLPTAVANATEAAAGSEEGKQDGFSKVKVKEKFMNELNK. A glycan (N-linked (GlcNAc...) asparagine) is linked at Asn-26. Residues 58 to 84 traverse the membrane as a helical segment; it reads IPLPPWALVAIAIVAIILGLTCCFCIC. Residues 85 to 427 lie on the Cytoplasmic side of the membrane; that stretch reads KKCLLKKKNK…EVDATLGMKK (343 aa). Residues 96-145 form a disordered region; the sequence is KGKEKGGKNAMTMKDVKEMGKSGKEQALKDEDEDAETGLTTDGKEEEKED. Residues 109 to 124 are compositionally biased toward basic and acidic residues; the sequence is KDVKEMGKSGKEQALK. The segment at 141–387 is phospholipid binding; the sequence is EEKEDEKLGK…AIGKVFVGYN (247 aa). C2 domains lie at 147–266 and 278–411; these read KLGK…EEWR and KLGD…AQWH. Leu-177, Asp-178, Asp-184, Asp-236, Phe-237, Asp-238, Ser-241, Lys-242, Asp-244, Asp-309, Asp-315, Asp-369, Asp-371, and Asp-377 together coordinate Ca(2+).

It belongs to the synaptotagmin family. In terms of assembly, homodimer or homotrimer (possible). It depends on Ca(2+) as a cofactor. In terms of tissue distribution, forebrain, cerebellum and neuroendocrine cells.

The protein localises to the cytoplasmic vesicle. Its subcellular location is the secretory vesicle. It is found in the synaptic vesicle membrane. The protein resides in the synapse. Its function is as follows. May have a regulatory role in the membrane interactions during trafficking of synaptic vesicles at the active zone of the synapse. It binds acidic phospholipids with a specificity that requires the presence of both an acidic head group and a diacyl backbone. The protein is Synaptotagmin-A (P65-A) of Diplobatis ommata (Ocellated electric ray).